Consider the following 176-residue polypeptide: NAD(P)H-quinone oxidoreductase subunit I, chloroplastic (176 aa).

2 consecutive 4Fe-4S ferredoxin-type domains span residues 55 to 84 (GRIH…VNWE) and 95 to 124 (QTYS…MTEE). Residues cysteine 64, cysteine 67, cysteine 70, cysteine 74, cysteine 104, cysteine 107, cysteine 110, and cysteine 114 each coordinate [4Fe-4S] cluster.

This sequence belongs to the complex I 23 kDa subunit family. NDH is composed of at least 16 different subunits, 5 of which are encoded in the nucleus. [4Fe-4S] cluster serves as cofactor.

Its subcellular location is the plastid. The protein localises to the chloroplast thylakoid membrane. The enzyme catalyses a plastoquinone + NADH + (n+1) H(+)(in) = a plastoquinol + NAD(+) + n H(+)(out). It carries out the reaction a plastoquinone + NADPH + (n+1) H(+)(in) = a plastoquinol + NADP(+) + n H(+)(out). NDH shuttles electrons from NAD(P)H:plastoquinone, via FMN and iron-sulfur (Fe-S) centers, to quinones in the photosynthetic chain and possibly in a chloroplast respiratory chain. The immediate electron acceptor for the enzyme in this species is believed to be plastoquinone. Couples the redox reaction to proton translocation, and thus conserves the redox energy in a proton gradient. This chain is NAD(P)H-quinone oxidoreductase subunit I, chloroplastic, found in Mesostigma viride (Green alga).